The primary structure comprises 320 residues: MKTVRGFASATVGNVACGFDVLGFAITEPGDEVILTLHEERKSECPVSITAISGDGGALPLDPKKNTSSFVVLKFLEYIRTSKGIDFKGHIDLELKKNLPLSSGMGSSAASAAAALAAANELLGQPCSKMELVHFAVEGERVACGSAHADNAAPAILGNFVLIRSYAPLDLITIPSPEHLFCTLVHPHTELKTSFARSVLPRSIPLKTATQQWGNVGALIAGLLKSDYDLIGRALVDVVAEPKRAPLIPGFLDVKHAAIDCGALGCSIAGSGPSVFAFSSSKETAERVGQAMREAFLLPETNLKSDMWVSPICKEGAKVL.

Pro-100–Ala-110 contributes to the ATP binding site.

The protein belongs to the GHMP kinase family. Homoserine kinase subfamily.

The protein resides in the cytoplasm. It carries out the reaction L-homoserine + ATP = O-phospho-L-homoserine + ADP + H(+). Its pathway is amino-acid biosynthesis; L-threonine biosynthesis; L-threonine from L-aspartate: step 4/5. Catalyzes the ATP-dependent phosphorylation of L-homoserine to L-homoserine phosphate. This Chlorobium phaeobacteroides (strain DSM 266 / SMG 266 / 2430) protein is Homoserine kinase.